Reading from the N-terminus, the 308-residue chain is MADKTKILIIGGTGYIGKFIVEASAKSEHPTFALARESTISDPVKGKIIQGFKNSGVTILTGDLYDHESLVKAIKQVDVVISTVGQLQLADQVKIIAAIKEAGNVKRFFPSDFGTDVDRCHAVEPAKSSFEIKSQIRRAIEAEGIPYTFVSANYFAGYSLPTLVQPEVTAPPRDKVIILGDGNAKAVFNEENDIGTYTIKAVDDARTLNKILYIKPPKNIYSFNELVALWEKKIGKTLEKIYVPEEQVLKQIQESPFPINIVMAINHSAFVKGDLTNFKIEPSFGVEASELYPDVKYTTVEEYLDQFV.

NADP(+) contacts are provided by residues 11–17, Arg-36, and Lys-45; that span reads GGTGYIG. Lys-133 serves as the catalytic Proton acceptor. Arg-137 provides a ligand contact to NADP(+).

Belongs to the NmrA-type oxidoreductase family. Isoflavone reductase subfamily. In terms of assembly, homodimer.

It is found in the cytoplasm. In Olea europaea (Common olive), this protein is Isoflavone reductase-like protein.